A 393-amino-acid polypeptide reads, in one-letter code: NAD(P)H-quinone oxidoreductase subunit H, chloroplastic (393 aa).

The protein belongs to the complex I 49 kDa subunit family. NDH is composed of at least 16 different subunits, 5 of which are encoded in the nucleus.

Its subcellular location is the plastid. It is found in the chloroplast thylakoid membrane. It carries out the reaction a plastoquinone + NADH + (n+1) H(+)(in) = a plastoquinol + NAD(+) + n H(+)(out). It catalyses the reaction a plastoquinone + NADPH + (n+1) H(+)(in) = a plastoquinol + NADP(+) + n H(+)(out). Its function is as follows. NDH shuttles electrons from NAD(P)H:plastoquinone, via FMN and iron-sulfur (Fe-S) centers, to quinones in the photosynthetic chain and possibly in a chloroplast respiratory chain. The immediate electron acceptor for the enzyme in this species is believed to be plastoquinone. Couples the redox reaction to proton translocation, and thus conserves the redox energy in a proton gradient. The protein is NAD(P)H-quinone oxidoreductase subunit H, chloroplastic of Eucalyptus globulus subsp. globulus (Tasmanian blue gum).